Consider the following 350-residue polypeptide: Ribosomal RNA large subunit methyltransferase M (350 aa).

S-adenosyl-L-methionine-binding positions include 217–220, D236, D256, and D272; that span reads APGG. K301 acts as the Proton acceptor in catalysis.

It belongs to the class I-like SAM-binding methyltransferase superfamily. RNA methyltransferase RlmE family. RlmM subfamily. As to quaternary structure, monomer.

It localises to the cytoplasm. The catalysed reaction is cytidine(2498) in 23S rRNA + S-adenosyl-L-methionine = 2'-O-methylcytidine(2498) in 23S rRNA + S-adenosyl-L-homocysteine + H(+). Its function is as follows. Catalyzes the 2'-O-methylation at nucleotide C2498 in 23S rRNA. This Cellvibrio japonicus (strain Ueda107) (Pseudomonas fluorescens subsp. cellulosa) protein is Ribosomal RNA large subunit methyltransferase M.